Consider the following 352-residue polypeptide: C-X-C chemokine receptor type 4 (352 aa).

An important for chemokine binding and signaling region spans residues 1-21; the sequence is MEGISIYTSDNYTEEMGSGDY. Residues 1–38 are Extracellular-facing; the sequence is MEGISIYTSDNYTEEMGSGDYDSIKEPCFREENAHFNR. Tyrosine 7 bears the Sulfotyrosine mark. Asparagine 11 carries N-linked (GlcNAc...) asparagine glycosylation. The residue at position 12 (tyrosine 12) is a Sulfotyrosine. Serine 18 is a glycosylation site (O-linked (Xyl...) (chondroitin sulfate) serine). The residue at position 21 (tyrosine 21) is a Sulfotyrosine. Cystine bridges form between cysteine 28-cysteine 274 and cysteine 109-cysteine 186. Residues 39 to 63 traverse the membrane as a helical segment; it reads IFLPTIYSIIFLTGIVGNGLVILVM. At 64–77 the chain is on the cytoplasmic side; sequence GYQKKLRSMTDKYR. A helical membrane pass occupies residues 78–99; it reads LHLSVADLLFVITLPFWAVDAV. The tract at residues 94-97 is chemokine binding; sequence WAVD. The Extracellular portion of the chain corresponds to 100–110; the sequence is ANWYFGNFLCK. A helical transmembrane segment spans residues 111–130; the sequence is AVHVIYTVNLYSSVLILAFI. Residues 113 to 117 are chemokine binding; the sequence is HVIYT. Residues 131 to 154 lie on the Cytoplasmic side of the membrane; the sequence is SLDRYLAIVHATNSQKPRKLLAEK. Residues 133-135 carry the Important for signaling motif; it reads DRY. An involved in dimerization; when bound to chemokine region spans residues 135–147; the sequence is YLAIVHATNSQKP. The helical transmembrane segment at 155–174 threads the bilayer; sequence VVYVGVWIPALLLTIPDFIF. Over 175–195 the chain is Extracellular; sequence ASVSEADDRYICDRFYPNDLW. The chemokine binding, important for signaling stretch occupies residues 186-190; the sequence is CDRFY. The segment at 191-210 is involved in dimerization; that stretch reads PNDLWVVVFQFQHIMVGLIL. The chain crosses the membrane as a helical span at residues 196–216; the sequence is VVVFQFQHIMVGLILPGIVIL. The Cytoplasmic segment spans residues 217 to 241; that stretch reads SCYCIIISKLSHSKGHQKGKALKTT. A helical transmembrane segment spans residues 242–261; the sequence is VILILAFFACWLPYYIGISI. At 262 to 282 the chain is on the extracellular side; sequence DSFILLEIIKQGCEFENTVHK. The interval 266 to 268 is involved in dimerization; that stretch reads LLE. A helical transmembrane segment spans residues 283 to 302; it reads WISITEALAFFHCCLNPILY. The Cytoplasmic segment spans residues 303–352; the sequence is AFLGAKFKTSAQHALTSVSRGSSLKILSKGKRGGHSSVSTESESSSFHSS. 2 positions are modified to phosphoserine: serine 319 and serine 321. Residues serine 324 and serine 325 each carry the phosphoserine; by PKC and GRK6 modification. The disordered stretch occupies residues 329 to 352; sequence LSKGKRGGHSSVSTESESSSFHSS. Serine 330 is modified (phosphoserine; by GRK6). Lysine 331 is covalently cross-linked (Glycyl lysine isopeptide (Lys-Gly) (interchain with G-Cter in ubiquitin)). Residues 337–352 show a composition bias toward low complexity; it reads HSSVSTESESSSFHSS. Serine 339 is subject to Phosphoserine; by GRK6. Phosphoserine occurs at positions 348 and 351.

Belongs to the G-protein coupled receptor 1 family. Monomer. Can form homodimers. Interacts with CD164. Interacts with ARRB2; the interaction is dependent on the C-terminal phosphorylation of CXCR4 and allows activation of MAPK1 and MAPK3. Interacts with ARR3; the interaction is dependent on the C-terminal phosphorylation of CXCR4 and modulates calcium mobilization. Interacts with RNF113A; the interaction, enhanced by CXCL12, promotes CXCR4 ubiquitination and subsequent degradation. Interacts (via the cytoplasmic C-terminal) with ITCH (via the WW domains I and II); the interaction, enhanced by CXCL12, promotes CXCR4 ubiquitination and leads to its degradation. Interacts with extracellular ubiquitin. Interacts with DBN1; this interaction is enhanced by antigenic stimulation. Following LPS binding, may form a complex with GDF5, HSP90AA1 and HSPA8. Post-translationally, phosphorylated on agonist stimulation. Rapidly phosphorylated on serine and threonine residues in the C-terminal. Phosphorylation at Ser-324 and Ser-325 leads to recruitment of ITCH, ubiquitination and protein degradation. Ubiquitinated after ligand binding, leading to its degradation. Ubiquitinated by ITCH at the cell membrane on agonist stimulation. The ubiquitin-dependent mechanism, endosomal sorting complex required for transport (ESCRT), then targets CXCR4 for lysosomal degradation. This process is dependent also on prior Ser-/Thr-phosphorylation in the C-terminal of CXCR4. Also binding of ARRB1 to STAM negatively regulates CXCR4 sorting to lysosomes though modulating ubiquitination of SFR5S. In terms of processing, sulfation is required for efficient binding of CXCL12/SDF-1alpha and promotes its dimerization. Post-translationally, O- and N-glycosylated. N-glycosylation can mask coreceptor function. The O-glycosylation chondroitin sulfate attachment does not affect interaction with CXCL12/SDF-1alpha nor its coreceptor activity.

It is found in the cell membrane. It localises to the cell junction. The protein resides in the early endosome. Its subcellular location is the late endosome. The protein localises to the lysosome. Functionally, receptor for the C-X-C chemokine CXCL12/SDF-1 that transduces a signal by increasing intracellular calcium ion levels and enhancing MAPK1/MAPK3 activation. Involved in the AKT signaling cascade. Plays a role in regulation of cell migration, e.g. during wound healing. Acts as a receptor for extracellular ubiquitin; leading to enhanced intracellular calcium ions and reduced cellular cAMP levels. Binds bacterial lipopolysaccharide (LPS) et mediates LPS-induced inflammatory response, including TNF secretion by monocytes. Involved in hematopoiesis and in cardiac ventricular septum formation. Also plays an essential role in vascularization of the gastrointestinal tract, probably by regulating vascular branching and/or remodeling processes in endothelial cells. Involved in cerebellar development. In the CNS, could mediate hippocampal-neuron survival. This Chlorocebus aethiops (Green monkey) protein is C-X-C chemokine receptor type 4 (CXCR4).